The following is a 73-amino-acid chain: uncharacterized protein (73 aa).

A signal peptide spans 1-22 (MKILGVTGFILICLLAISVLMD). A helical transmembrane segment spans residues 44–66 (TFAEWVVLLFFVLVLVREMYVIY).

The protein localises to the membrane. This is an uncharacterized protein from Bacillus subtilis (strain 168).